A 269-amino-acid polypeptide reads, in one-letter code: Protein LNK3 (269 aa).

In terms of assembly, interacts with REV8.

Its function is as follows. Probable transcriptional coactivator. The polypeptide is Protein LNK3 (Arabidopsis thaliana (Mouse-ear cress)).